The sequence spans 222 residues: MKSAVIQLPGLNRDRDMIAALTKISGQAPVTVWQTETELPEVDLIVIPGGFSYGDYLRCGAIAARMPVMKAVAEKAAKGVLVIGVCNGFQILLEAGLLPGALMRNASLKFVCREVKLQVANANTAFTRAYAPGQIIRCPVAHHDGNFFAAPETLARIEGEGQVAFRYAEGTNPNGSINDIAGIVNGAGNVLGLMPHPENLVEAAHGGTDGRALFESVLGRAA.

In terms of domain architecture, Glutamine amidotransferase type-1 spans 3–222 (SAVIQLPGLN…LFESVLGRAA (220 aa)). Cys86 acts as the Nucleophile in catalysis. Active-site residues include His196 and Glu198.

Part of the FGAM synthase complex composed of 1 PurL, 1 PurQ and 2 PurS subunits.

The protein resides in the cytoplasm. It catalyses the reaction N(2)-formyl-N(1)-(5-phospho-beta-D-ribosyl)glycinamide + L-glutamine + ATP + H2O = 2-formamido-N(1)-(5-O-phospho-beta-D-ribosyl)acetamidine + L-glutamate + ADP + phosphate + H(+). The enzyme catalyses L-glutamine + H2O = L-glutamate + NH4(+). It participates in purine metabolism; IMP biosynthesis via de novo pathway; 5-amino-1-(5-phospho-D-ribosyl)imidazole from N(2)-formyl-N(1)-(5-phospho-D-ribosyl)glycinamide: step 1/2. Functionally, part of the phosphoribosylformylglycinamidine synthase complex involved in the purines biosynthetic pathway. Catalyzes the ATP-dependent conversion of formylglycinamide ribonucleotide (FGAR) and glutamine to yield formylglycinamidine ribonucleotide (FGAM) and glutamate. The FGAM synthase complex is composed of three subunits. PurQ produces an ammonia molecule by converting glutamine to glutamate. PurL transfers the ammonia molecule to FGAR to form FGAM in an ATP-dependent manner. PurS interacts with PurQ and PurL and is thought to assist in the transfer of the ammonia molecule from PurQ to PurL. In Chelativorans sp. (strain BNC1), this protein is Phosphoribosylformylglycinamidine synthase subunit PurQ.